The primary structure comprises 229 residues: Protein GrpE (229 aa).

Residues 1–89 (MSDFNKDDYL…AEGSSLTPLG (89 aa)) form a disordered region. A compositionally biased stretch (low complexity) spans 24–36 (ASPDADGADAPSD). Basic and acidic residues predominate over residues 39–50 (EQLKDDMLKDAA). The segment covering 65-84 (KAAAEATADAASDGDAEGSS) has biased composition (low complexity).

It belongs to the GrpE family. In terms of assembly, homodimer.

It localises to the cytoplasm. In terms of biological role, participates actively in the response to hyperosmotic and heat shock by preventing the aggregation of stress-denatured proteins, in association with DnaK and GrpE. It is the nucleotide exchange factor for DnaK and may function as a thermosensor. Unfolded proteins bind initially to DnaJ; upon interaction with the DnaJ-bound protein, DnaK hydrolyzes its bound ATP, resulting in the formation of a stable complex. GrpE releases ADP from DnaK; ATP binding to DnaK triggers the release of the substrate protein, thus completing the reaction cycle. Several rounds of ATP-dependent interactions between DnaJ, DnaK and GrpE are required for fully efficient folding. The chain is Protein GrpE from Bifidobacterium animalis subsp. lactis (strain AD011).